Reading from the N-terminus, the 768-residue chain is Photosystem I P700 chlorophyll a apoprotein A1 (768 aa).

Helical transmembrane passes span V76 to A99, L162 to H185, L201 to A225, I310 to Y328, W369 to Y392, L408 to I434, A456 to H478, and F559 to L577. Residues C601 and C610 each contribute to the [4Fe-4S] cluster site. 2 helical membrane passes run H617–W638 and I682–F704. Residue H693 participates in divinylchlorophyll a' binding. The divinyl chlorophyll a site is built by M701 and Y709. W710 contributes to the phylloquinone binding site. The helical transmembrane segment at A742 to A762 threads the bilayer.

Belongs to the PsaA/PsaB family. As to quaternary structure, the PsaA/B heterodimer binds the P700 divinyl chlorophyll special pair and subsequent electron acceptors. PSI consists of a core antenna complex that captures photons, and an electron transfer chain that converts photonic excitation into a charge separation. The cyanobacterial PSI reaction center is composed of one copy each of PsaA,B,C,D,E,F,I,J,K,L,M and X, and forms trimeric complexes. The cofactor is PSI electron transfer chain: 5 divinyl chlorophyll a, 1 divinyl chlorophyll a', 2 phylloquinones and 3 4Fe-4S clusters. PSI core antenna: 90 divinyl chlorophyll a, 22 carotenoids, 3 phospholipids and 1 galactolipid. P700 is a divinyl chlorophyll a/divinyl chlorophyll a' dimer, A0 is one or more divinyl chlorophyll a, A1 is one or both phylloquinones and FX is a shared 4Fe-4S iron-sulfur center..

The protein resides in the cellular thylakoid membrane. The enzyme catalyses reduced [plastocyanin] + hnu + oxidized [2Fe-2S]-[ferredoxin] = oxidized [plastocyanin] + reduced [2Fe-2S]-[ferredoxin]. Functionally, psaA and PsaB bind P700, the primary electron donor of photosystem I (PSI), as well as the electron acceptors A0, A1 and FX. PSI is a plastocyanin/cytochrome c6-ferredoxin oxidoreductase, converting photonic excitation into a charge separation, which transfers an electron from the donor P700 chlorophyll pair to the spectroscopically characterized acceptors A0, A1, FX, FA and FB in turn. Oxidized P700 is reduced on the lumenal side of the thylakoid membrane by plastocyanin or cytochrome c6. The polypeptide is Photosystem I P700 chlorophyll a apoprotein A1 (Prochlorococcus marinus (strain NATL1A)).